The primary structure comprises 228 residues: MKAAVISFPGSNCDLDLQWAVRDIAGAECDLIKPTQTDLTAYDVVMVPGGFSYGDYLRSGAIARFSPVMDALKQFAAAGGYVIGICNGFQILTEAGFLPGALQWNRDLNFICEPVALTVENAGTAFSNQYQVGDHLTLPIAHGEGNYYADPETLAALETNGQVVFRYANNPNGSMHDIAGVTNETGNVLGMMPHPERAVEALLGGTDGLGVFQSLINQTEGADVRGAR.

The Glutamine amidotransferase type-1 domain occupies 2–225 (KAAVISFPGS…INQTEGADVR (224 aa)). Cysteine 86 acts as the Nucleophile in catalysis. Residues histidine 194 and glutamate 196 contribute to the active site.

As to quaternary structure, part of the FGAM synthase complex composed of 1 PurL, 1 PurQ and 2 PurS subunits.

It localises to the cytoplasm. The catalysed reaction is N(2)-formyl-N(1)-(5-phospho-beta-D-ribosyl)glycinamide + L-glutamine + ATP + H2O = 2-formamido-N(1)-(5-O-phospho-beta-D-ribosyl)acetamidine + L-glutamate + ADP + phosphate + H(+). It catalyses the reaction L-glutamine + H2O = L-glutamate + NH4(+). It functions in the pathway purine metabolism; IMP biosynthesis via de novo pathway; 5-amino-1-(5-phospho-D-ribosyl)imidazole from N(2)-formyl-N(1)-(5-phospho-D-ribosyl)glycinamide: step 1/2. Its function is as follows. Part of the phosphoribosylformylglycinamidine synthase complex involved in the purines biosynthetic pathway. Catalyzes the ATP-dependent conversion of formylglycinamide ribonucleotide (FGAR) and glutamine to yield formylglycinamidine ribonucleotide (FGAM) and glutamate. The FGAM synthase complex is composed of three subunits. PurQ produces an ammonia molecule by converting glutamine to glutamate. PurL transfers the ammonia molecule to FGAR to form FGAM in an ATP-dependent manner. PurS interacts with PurQ and PurL and is thought to assist in the transfer of the ammonia molecule from PurQ to PurL. The protein is Phosphoribosylformylglycinamidine synthase subunit PurQ of Lacticaseibacillus casei (strain BL23) (Lactobacillus casei).